Consider the following 102-residue polypeptide: Small ribosomal subunit protein uS10 (102 aa).

Belongs to the universal ribosomal protein uS10 family. As to quaternary structure, part of the 30S ribosomal subunit.

Involved in the binding of tRNA to the ribosomes. This chain is Small ribosomal subunit protein uS10, found in Trichlorobacter lovleyi (strain ATCC BAA-1151 / DSM 17278 / SZ) (Geobacter lovleyi).